Consider the following 147-residue polypeptide: Hemoglobin subunit beta (147 aa).

The residue at position 2 (V2) is an N-acetylvaline. The Globin domain maps to 3-147 (HLSAEEKGHI…VATALAHKYH (145 aa)). K60 is subject to N6-acetyllysine. H64 is a heme b binding site. At K83 the chain carries N6-acetyllysine. Position 93 (H93) interacts with heme b. Residue C94 is modified to S-nitrosocysteine. The residue at position 145 (K145) is an N6-acetyllysine.

It belongs to the globin family. As to quaternary structure, heterotetramer of two alpha chains and two beta chains. Red blood cells.

In terms of biological role, involved in oxygen transport from the lung to the various peripheral tissues. This is Hemoglobin subunit beta (HBB) from Sminthopsis crassicaudata (Fat-tailed dunnart).